The sequence spans 458 residues: MSQNKLWGGRFTQPTDKFVEEFTASIDFDKRLYHQDIRGSVAHARMLGRQGIIPQQDVEQIVHGLKDILAQIEAGQFDFSVGLEDIHMNIEARLSQKIGEAGKRLHTGRSRNDQVALDIRLYLRDEIVEVVAYLDMLIDSLLEQAEKNLEVVMPGFTHLQSAQPILFSHHMLAYVEMFKRDKGRMDDCLKRVNVLPLGAGALAGTTFPIDREYVAEQLDFPAVTRNSLDSVSDRDFALEFIAASSILMMHLSRLSEELIIWSTSAFRFVDLSDGFCTGSSIMPQKKNPDVPELVRGKTGRVYGNLMALLTVMKALPLAYNKDMQEDKEPLFDTIDTVKGSLKIFADMIREMRVNSSSMGRAAGQGFSTATDVADYLVRKGLPFRDAHEAVGKAVAYCVENEMDIIDLSLAEWQLFSPHFSDDIFAAITVEASVNARDVIGGTARNRVEDEIRRCREGK.

The protein belongs to the lyase 1 family. Argininosuccinate lyase subfamily.

It localises to the cytoplasm. It carries out the reaction 2-(N(omega)-L-arginino)succinate = fumarate + L-arginine. Its pathway is amino-acid biosynthesis; L-arginine biosynthesis; L-arginine from L-ornithine and carbamoyl phosphate: step 3/3. This chain is Argininosuccinate lyase, found in Trichlorobacter lovleyi (strain ATCC BAA-1151 / DSM 17278 / SZ) (Geobacter lovleyi).